Consider the following 185-residue polypeptide: Ribosome-recycling factor (185 aa).

Belongs to the RRF family.

The protein localises to the cytoplasm. In terms of biological role, responsible for the release of ribosomes from messenger RNA at the termination of protein biosynthesis. May increase the efficiency of translation by recycling ribosomes from one round of translation to another. This is Ribosome-recycling factor from Corynebacterium efficiens (strain DSM 44549 / YS-314 / AJ 12310 / JCM 11189 / NBRC 100395).